Consider the following 276-residue polypeptide: MGCGPSQPAEDRRRVRAPKKGWKEEFKADVSVPHTGENCSPRMEAALTKNTVDIAEGLEQVQMGSLPGTISENSPSPSERNRRVNSDLVTNGLINKPQSLESRERQKSSDILEELIVQGIIQSHSKVFRNGESYDVTLTTTEKPLRKPPSRLKKLKIKKQVKDFTMKDIEEKMEAAEERRKTKEEEIRKRLRSDRLLPSANHSDSAELDGAEVAFAKGLQRVRSAGFEPSDLQGGKPLKRKKSKCDATLIDRNESDESFGVVESDMSYNQADDIVY.

3 disordered regions span residues 1 to 40 (MGCG…ENCS), 61 to 106 (VQMG…RERQ), and 226 to 250 (GFEP…ATLI). Residue Gly-2 is the site of N-myristoyl glycine attachment. 2 stretches are compositionally biased toward polar residues: residues 68-78 (GTISENSPSPS) and 87-100 (DLVT…PQSL). The SLD domain maps to 118 to 244 (QGIIQSHSKV…GKPLKRKKSK (127 aa)).

The sequence is that of Stathmin domain-containing protein 1 (STMND1) from Homo sapiens (Human).